The chain runs to 536 residues: GMP synthase [glutamine-hydrolyzing] (536 aa).

In terms of domain architecture, Glutamine amidotransferase type-1 spans 4 to 206 (KILILDFGSQ…VLDICGARAD (203 aa)). Cys85 functions as the Nucleophile in the catalytic mechanism. Catalysis depends on residues His180 and Glu182. The GMPS ATP-PPase domain occupies 207 to 404 (WIMGDYISEA…LGLPYHMVYR (198 aa)). Residue 234–240 (SGGVDSS) coordinates ATP.

In terms of assembly, homodimer.

It carries out the reaction XMP + L-glutamine + ATP + H2O = GMP + L-glutamate + AMP + diphosphate + 2 H(+). It functions in the pathway purine metabolism; GMP biosynthesis; GMP from XMP (L-Gln route): step 1/1. Its function is as follows. Catalyzes the synthesis of GMP from XMP. This Albidiferax ferrireducens (strain ATCC BAA-621 / DSM 15236 / T118) (Rhodoferax ferrireducens) protein is GMP synthase [glutamine-hydrolyzing].